We begin with the raw amino-acid sequence, 447 residues long: 3-phosphoshikimate 1-carboxyvinyltransferase (447 aa).

Residues 1–22 form a disordered region; the sequence is MTPSLKRLSGAMRARPAPALSG. Residues K30, S31, and R35 each contribute to the 3-phosphoshikimate site. K30 contributes to the phosphoenolpyruvate binding site. G102 and R130 together coordinate phosphoenolpyruvate. Residues S173, Q175, D325, and K352 each coordinate 3-phosphoshikimate. Q175 contributes to the phosphoenolpyruvate binding site. D325 acts as the Proton acceptor in catalysis. Residues R356 and R401 each contribute to the phosphoenolpyruvate site.

Belongs to the EPSP synthase family. In terms of assembly, monomer.

It localises to the cytoplasm. The enzyme catalyses 3-phosphoshikimate + phosphoenolpyruvate = 5-O-(1-carboxyvinyl)-3-phosphoshikimate + phosphate. It functions in the pathway metabolic intermediate biosynthesis; chorismate biosynthesis; chorismate from D-erythrose 4-phosphate and phosphoenolpyruvate: step 6/7. Functionally, catalyzes the transfer of the enolpyruvyl moiety of phosphoenolpyruvate (PEP) to the 5-hydroxyl of shikimate-3-phosphate (S3P) to produce enolpyruvyl shikimate-3-phosphate and inorganic phosphate. The polypeptide is 3-phosphoshikimate 1-carboxyvinyltransferase (Maricaulis maris (strain MCS10) (Caulobacter maris)).